The primary structure comprises 405 residues: Imidazolonepropionase (405 aa).

Fe(3+) is bound by residues H72 and H74. Positions 72 and 74 each coordinate Zn(2+). 4-imidazolone-5-propanoate contacts are provided by R81, Y144, and H177. Y144 lines the N-formimidoyl-L-glutamate pocket. H242 contributes to the Fe(3+) binding site. H242 serves as a coordination point for Zn(2+). Q245 is a binding site for 4-imidazolone-5-propanoate. D317 is a binding site for Fe(3+). D317 lines the Zn(2+) pocket. N-formimidoyl-L-glutamate contacts are provided by N319 and G321. T322 serves as a coordination point for 4-imidazolone-5-propanoate.

The protein belongs to the metallo-dependent hydrolases superfamily. HutI family. It depends on Zn(2+) as a cofactor. Fe(3+) is required as a cofactor.

It localises to the cytoplasm. It carries out the reaction 4-imidazolone-5-propanoate + H2O = N-formimidoyl-L-glutamate. Its pathway is amino-acid degradation; L-histidine degradation into L-glutamate; N-formimidoyl-L-glutamate from L-histidine: step 3/3. Catalyzes the hydrolytic cleavage of the carbon-nitrogen bond in imidazolone-5-propanoate to yield N-formimidoyl-L-glutamate. It is the third step in the universal histidine degradation pathway. The chain is Imidazolonepropionase from Klebsiella pneumoniae subsp. pneumoniae (strain ATCC 700721 / MGH 78578).